The chain runs to 527 residues: Putative BTB/POZ domain and WD-repeat protein R783 (527 aa).

Residues 45 to 115 (TDVTIVLDDG…FYSQNTDTRN (71 aa)) enclose the BTB domain. WD repeat units follow at residues 215–266 (IHGD…VEAS), 272–310 (NVKT…LIKT), 313–353 (KHKN…IVRC), 355–391 (ISPV…FLFK), and 436–476 (YCPS…DNKY).

This sequence belongs to the mimivirus BTB/WD family.

The chain is Putative BTB/POZ domain and WD-repeat protein R783 from Acanthamoeba polyphaga (Amoeba).